We begin with the raw amino-acid sequence, 472 residues long: UDP-N-acetylmuramate--L-alanine ligase (472 aa).

Position 123-129 (123-129 (GSHGKTT)) interacts with ATP.

Belongs to the MurCDEF family.

The protein resides in the cytoplasm. It carries out the reaction UDP-N-acetyl-alpha-D-muramate + L-alanine + ATP = UDP-N-acetyl-alpha-D-muramoyl-L-alanine + ADP + phosphate + H(+). Its pathway is cell wall biogenesis; peptidoglycan biosynthesis. In terms of biological role, cell wall formation. The polypeptide is UDP-N-acetylmuramate--L-alanine ligase (Solibacter usitatus (strain Ellin6076)).